The chain runs to 150 residues: Ribonuclease pancreatic (150 aa).

The N-terminal stretch at 1–26 is a signal peptide; it reads MALKSLVLLSLLVLVLLLVRVQPSLG. N-linked (Glc) (glycation) lysine; in vitro glycans are attached at residues K27 and K33. Substrate is bound by residues K33 and R36. H38 (proton acceptor) is an active-site residue. 4 cysteine pairs are disulfide-bonded: C52–C110, C66–C121, C84–C136, and C91–C98. N-linked (GlcNAc...) asparagine; partial glycosylation occurs at N60. N-linked (Glc) (glycation) lysine; in vitro glycosylation is found at K63 and K67. Substrate contacts are provided by residues 67 to 71, K92, and R111; that span reads KPVNT. H145 functions as the Proton donor in the catalytic mechanism.

The protein belongs to the pancreatic ribonuclease family. As to quaternary structure, interacts with and forms tight 1:1 complexes with RNH1. Dimerization of two such complexes may occur. Interaction with RNH1 inhibits this protein. Monomer. In terms of tissue distribution, pancreas.

The protein resides in the secreted. The enzyme catalyses an [RNA] containing cytidine + H2O = an [RNA]-3'-cytidine-3'-phosphate + a 5'-hydroxy-ribonucleotide-3'-[RNA].. The catalysed reaction is an [RNA] containing uridine + H2O = an [RNA]-3'-uridine-3'-phosphate + a 5'-hydroxy-ribonucleotide-3'-[RNA].. In terms of biological role, endonuclease that catalyzes the cleavage of RNA on the 3' side of pyrimidine nucleotides. Acts on single-stranded and double-stranded RNA. The chain is Ribonuclease pancreatic (RNASE1) from Bos taurus (Bovine).